Here is a 172-residue protein sequence, read N- to C-terminus: Galectin-related protein (172 aa).

The residue at position 2 (Ala-2) is an N-acetylalanine. 2 positions are modified to phosphoserine: Ser-22 and Ser-25. A Galectin domain is found at 39–168; that stretch reads PFCGHIKGGM…TIKINGDLQI (130 aa).

As to quaternary structure, monomer.

Its function is as follows. Does not bind lactose, and may not bind carbohydrates. This chain is Galectin-related protein (Lgalsl), found in Mus musculus (Mouse).